The primary structure comprises 151 residues: Coiled-coil-helix-coiled-coil-helix domain-containing protein 2 (151 aa).

Disordered regions lie at residues 1–50 and 77–111; these read MPRG…AAAP and GHAI…AQQQ. Low complexity predominate over residues 10–26; sequence SRMAPPASRAPQMRAAP. The span at 27 to 38 shows a compositional bias: pro residues; the sequence is RPAPVAQPPAAA. Low complexity-rich tracts occupy residues 39-50 and 100-111; these read PPSAVGSSAAAP and QEPQGTQPAQQQ. In terms of domain architecture, CHCH spans 111 to 151; the sequence is QQPCLYEIKQFLECAQNQGDIKLCEGFNEVLKQCRLANGLA. 2 short sequence motifs (cx9C motif) span residues 114–124 and 134–144; these read CLYEIKQFLEC and CEGFNEVLKQC. Disulfide bonds link C114–C144 and C124–C134.

In terms of assembly, interacts with RBPJ.

It localises to the nucleus. The protein resides in the mitochondrion. The protein localises to the mitochondrion intermembrane space. Functionally, transcription factor. Binds to the oxygen responsive element of COX4I2 and activates its transcription under hypoxia conditions (4% oxygen), as well as normoxia conditions (20% oxygen). This is Coiled-coil-helix-coiled-coil-helix domain-containing protein 2 (CHCHD2) from Homo sapiens (Human).